Reading from the N-terminus, the 280-residue chain is 3-dehydroshikimate dehydratase (280 aa).

Substrate contacts are provided by Y70, R102, and E142. A Mn(2+)-binding site is contributed by E142. The active-site Proton acceptor is the H144. The substrate site is built by D172 and H175. D172 is a binding site for Mn(2+). H198 contacts Mn(2+). Residues Y217 and E253 each contribute to the substrate site. Residue E253 participates in Mn(2+) binding.

As to quaternary structure, homodimer. Mn(2+) serves as cofactor.

The catalysed reaction is 3-dehydroshikimate = 3,4-dihydroxybenzoate + H2O. It participates in aromatic compound metabolism; 3,4-dihydroxybenzoate biosynthesis; 3,4-dihydroxybenzoate from 3-dehydroquinate: step 2/2. The protein operates within siderophore biosynthesis; petrobactin biosynthesis. In terms of biological role, involved in the biosynthesis of petrobactin, a catecholate siderophore that functions in both iron acquisition and virulence. Catalyzes the conversion of 3-dehydroshikimate to 3,4-dihydroxybenzoate (3,4-DHBA). In Bacillus anthracis, this protein is 3-dehydroshikimate dehydratase.